Reading from the N-terminus, the 369-residue chain is Nudix hydrolase 8 (369 aa).

The 131-residue stretch at 188–318 (SHQVGVGGFV…GDKMFKRVIE (131 aa)) folds into the Nudix hydrolase domain. A Nudix box motif is present at residues 225–246 (GFINESEEIFSGAVREVKEETG). E240 and E244 together coordinate Mg(2+).

The protein belongs to the Nudix hydrolase family. The cofactor is Mg(2+). Mn(2+) is required as a cofactor. As to expression, expressed in roots, stems and, at lower level, leaves.

Functionally, probably mediates the hydrolysis of some nucleoside diphosphate derivatives. May be involved in plant immunity and act as a positive regulator of defense response through salicylic acid (SA) signaling. The chain is Nudix hydrolase 8 (NUDT8) from Arabidopsis thaliana (Mouse-ear cress).